Consider the following 717-residue polypeptide: Methylcrotonoyl-CoA carboxylase subunit alpha, mitochondrial (717 aa).

The N-terminal 38 residues, 1–38 (MAAAALLAAVDRNQLRRVPILLLQPREWAWKLRTMKYG), are a transit peptide targeting the mitochondrion. Positions 45 to 490 (ITKVLIANRG…HTDFIPQHHK (446 aa)) constitute a Biotin carboxylation domain. K159 lines the ATP pocket. Residues 163 to 360 (KSIMAAAGVP…LVEWQLRIAA (198 aa)) form the ATP-grasp domain. 2 positions are modified to N6-acetyllysine: K180 and K193. Residues K201 and 207-208 (GG) each bind ATP. At K233 the chain carries N6-acetyllysine. Residues H251, H278, and E318 each coordinate ATP. The active site involves R335. K490 is subject to N6-acetyllysine. K577 is subject to N6-acetyllysine; alternate. An N6-succinyllysine; alternate modification is found at K577. A Biotinyl-binding domain is found at 622-711 (SIEVGIPVPK…NRHAPLVEFE (90 aa)). K677 carries the post-translational modification N6-biotinyllysine.

Probably a dodecamer composed of six biotin-containing alpha subunits (MCCC1) and six beta (MCCC2) subunits. Interacts (via the biotin carboxylation domain) with SIRT4. Requires biotin as cofactor. In terms of processing, acetylated.

The protein localises to the mitochondrion matrix. It catalyses the reaction 3-methylbut-2-enoyl-CoA + hydrogencarbonate + ATP = 3-methyl-(2E)-glutaconyl-CoA + ADP + phosphate + H(+). It participates in amino-acid degradation; L-leucine degradation; (S)-3-hydroxy-3-methylglutaryl-CoA from 3-isovaleryl-CoA: step 2/3. In terms of biological role, biotin-attachment subunit of the 3-methylcrotonyl-CoA carboxylase, an enzyme that catalyzes the conversion of 3-methylcrotonyl-CoA to 3-methylglutaconyl-CoA, a critical step for leucine and isovaleric acid catabolism. The sequence is that of Methylcrotonoyl-CoA carboxylase subunit alpha, mitochondrial (Mccc1) from Mus musculus (Mouse).